A 292-amino-acid chain; its full sequence is MNKYTINDITRASGGFAMLAVDQREAMRMMFAAAGAPAPVADSVLTDFKVNAAKTLSPYASAILVDQQFCYRQVVEQNAIAKSCAMIVAADEFIPGNGIPVDSVVIDRKINPLQIKQDGGKALKLLVLWRSDEDAQQRLDMVKEFNELCHSHGLVSIIEPVVRPPRRGDKFDREQAIIDAAKELGDSGADLYKVEMPLYGKGPQQELLSASQRLNDHINMPWVILSSGVDEKLFPRAVRVAMTAGASGFLAGRAVWASVVGLPDNELMLRDVCAPKLQQLGDIVDEMMAKRR.

Lysine 193 (schiff-base intermediate with substrate) is an active-site residue.

It belongs to the aldolase LacD family. As to quaternary structure, homotetramer.

It catalyses the reaction 6-deoxy-6-sulfo-D-fructose 1-phosphate = (2S)-3-sulfolactaldehyde + dihydroxyacetone phosphate. In terms of biological role, cleaves 6-deoxy-6-sulfo-D-fructose 1-phosphate (SFP) to form dihydroxyacetone phosphate (DHAP) and 3-sulfolactaldehyde (SLA). The protein is Sulfofructosephosphate aldolase (yihT) of Escherichia coli O157:H7.